A 478-amino-acid polypeptide reads, in one-letter code: Protein ZINC INDUCED FACILITATOR-LIKE 1 (478 aa).

Helical transmembrane passes span 43 to 63, 81 to 101, 108 to 128, 130 to 150, 169 to 189, 208 to 228, 280 to 300, 317 to 337, 346 to 367, 378 to 398, 415 to 435, and 453 to 473; these read IIVL…YFMI, FVGC…GLVA, PVIL…GLSL, FWMA…LGPI, AVST…GFLA, FPFF…TIVS, IIVY…FSLW, VGSV…SLYS, IIVT…PLIA, VTSA…GLFI, IAMT…GIIF, and VFFI…KPFL.

Belongs to the major facilitator superfamily. Predominantly expressed in roots and stomatal guard cells. Detected in anther stamen filaments and shoot apical meristem. In the mature portion of roots, restricted to the cortex. At the root tip, highly expressed in both the cortical and epidermal cell layers of the apical meristem and the transition zone, while absent from the quiescent center or the columella cells. Not detected in lateral root primordia.

It is found in the cell membrane. The protein resides in the vacuole membrane. Its function is as follows. Major facilitator superfamily (MFS) transporter probably involved in 2,4-dichlorophenoxyacetic acid (2,4-D) export. K(+) may be the physiological substrate of the transporter. Functionally, modulates root auxin-related processes. Involved in auxin efflux and acts as a positive regulator of shootward transport at the root apex. May mediate proton efflux from the vacuolar compartment. In terms of biological role, mediates drought stress tolerance by regulating stomatal closure. The sequence is that of Protein ZINC INDUCED FACILITATOR-LIKE 1 (ZIFL1) from Arabidopsis thaliana (Mouse-ear cress).